Reading from the N-terminus, the 92-residue chain is Large ribosomal subunit protein eL43y (92 aa).

The segment at 39–60 (CEFCGKYGVKRKAVGIWGCKDC) adopts a C4-type zinc-finger fold.

It belongs to the eukaryotic ribosomal protein eL43 family.

In Arabidopsis thaliana (Mouse-ear cress), this protein is Large ribosomal subunit protein eL43y (RPL37AC).